The chain runs to 276 residues: Vitamin B12-binding protein (276 aa).

The first 20 residues, 1–20 (MIVRFLCWLTGLLLCTAAYA), serve as a signal peptide directing secretion. A Fe/B12 periplasmic-binding domain is found at 24–273 (RVISLAPHAT…QLTALSPGSS (250 aa)). Cys-186 and Cys-262 are joined by a disulfide.

Belongs to the BtuF family. The complex is composed of two ATP-binding proteins (BtuD), two transmembrane proteins (BtuC) and a solute-binding protein (BtuF).

The protein localises to the periplasm. Functionally, part of the ABC transporter complex BtuCDF involved in vitamin B12 import. Binds vitamin B12 and delivers it to the periplasmic surface of BtuC. The chain is Vitamin B12-binding protein from Pectobacterium carotovorum subsp. carotovorum (strain PC1).